We begin with the raw amino-acid sequence, 452 residues long: Cobyrinate a,c-diamide synthase (452 aa).

Residues 244-429 enclose the GATase cobBQ-type domain; that stretch reads RIAVARDRAF…LHLHWGTQAW (186 aa). Catalysis depends on Cys-325, which acts as the Nucleophile.

It belongs to the CobB/CbiA family. Requires Mg(2+) as cofactor.

It carries out the reaction cob(II)yrinate + 2 L-glutamine + 2 ATP + 2 H2O = cob(II)yrinate a,c diamide + 2 L-glutamate + 2 ADP + 2 phosphate + 2 H(+). It functions in the pathway cofactor biosynthesis; adenosylcobalamin biosynthesis; cob(II)yrinate a,c-diamide from sirohydrochlorin (anaerobic route): step 10/10. Functionally, catalyzes the ATP-dependent amidation of the two carboxylate groups at positions a and c of cobyrinate, using either L-glutamine or ammonia as the nitrogen source. The sequence is that of Cobyrinate a,c-diamide synthase from Gloeobacter violaceus (strain ATCC 29082 / PCC 7421).